Reading from the N-terminus, the 674-residue chain is Cysteine-rich receptor-like protein kinase 6 (674 aa).

Positions 1-24 are cleaved as a signal peptide; sequence MSSLISFNFLFLFSFLTSSFTASA. Residues 25–289 lie on the Extracellular side of the membrane; the sequence is QDPFYLNHYC…LPGKSGNSTV (265 aa). Gnk2-homologous domains follow at residues 28 to 132 and 139 to 245; these read FYLN…HKNI and NEGE…LYPF. N-linked (GlcNAc...) asparagine glycans are attached at residues N36, N43, N61, N70, N104, N178, and N247. A compositionally biased stretch (pro residues) spans 254-266; that stretch reads PPLPPPPPPPPPR. Residues 254 to 284 form a disordered region; the sequence is PPLPPPPPPPPPRESLVSTPPISSSSLPGKS. Positions 268–284 are enriched in low complexity; it reads SLVSTPPISSSSLPGKS. The N-linked (GlcNAc...) asparagine glycan is linked to N286. A helical transmembrane segment spans residues 290–310; that stretch reads LVVAVVVLAVLLFIALVGYCF. The Cytoplasmic portion of the chain corresponds to 311-674; it reads LAKKKKKTFD…DESITDLYPR (364 aa). A Protein kinase domain is found at 351–637; the sequence is FAESNKIGRG…TLPVPRQPGF (287 aa). ATP is bound by residues 357–365 and K379; that span reads IGRGGFGEV. Position 424 is a phosphotyrosine (Y424). The Proton acceptor role is filled by D476. A Phosphoserine modification is found at S480. T516 carries the post-translational modification Phosphothreonine. Y524 bears the Phosphotyrosine mark. The disordered stretch occupies residues 648–674; sequence LDSDQSTTTKSFPASIDDESITDLYPR. The span at 650–659 shows a compositional bias: polar residues; the sequence is SDQSTTTKSF.

It belongs to the protein kinase superfamily. Ser/Thr protein kinase family. CRK subfamily.

Its subcellular location is the membrane. It carries out the reaction L-seryl-[protein] + ATP = O-phospho-L-seryl-[protein] + ADP + H(+). The catalysed reaction is L-threonyl-[protein] + ATP = O-phospho-L-threonyl-[protein] + ADP + H(+). The protein is Cysteine-rich receptor-like protein kinase 6 (CRK6) of Arabidopsis thaliana (Mouse-ear cress).